Reading from the N-terminus, the 714-residue chain is Polyribonucleotide nucleotidyltransferase (714 aa).

Positions 487 and 493 each coordinate Mg(2+). The KH domain occupies 554 to 613 (PRIEVLQIPTDKIRDVIGTGGKVIREIVEKTGAKINIEDDGTVKVASANGESIRAAIKWI). An S1 motif domain is found at 623-691 (GQIYDGTVVK…DRGKVRLSMK (69 aa)).

This sequence belongs to the polyribonucleotide nucleotidyltransferase family. The cofactor is Mg(2+).

The protein localises to the cytoplasm. The catalysed reaction is RNA(n+1) + phosphate = RNA(n) + a ribonucleoside 5'-diphosphate. Involved in mRNA degradation. Catalyzes the phosphorolysis of single-stranded polyribonucleotides processively in the 3'- to 5'-direction. The chain is Polyribonucleotide nucleotidyltransferase from Afipia carboxidovorans (strain ATCC 49405 / DSM 1227 / KCTC 32145 / OM5) (Oligotropha carboxidovorans).